Consider the following 700-residue polypeptide: Constitutive coactivator of peroxisome proliferator-activated receptor gamma (700 aa).

The protein belongs to the constitutive coactivator of PPAR-gamma family. As to quaternary structure, interacts with ESR1 and RXRA. Interacts with PPARG; in a ligand-independent manner.

It localises to the nucleus. Functions as a transactivator of PPARG and ESR1. Functions in adipogenesis through PPARG activation. In Bos taurus (Bovine), this protein is Constitutive coactivator of peroxisome proliferator-activated receptor gamma (FAM120B).